The primary structure comprises 206 residues: FMN-dependent NADH:quinone oxidoreductase 2 (206 aa).

Ser10 serves as a coordination point for FMN.

This sequence belongs to the azoreductase type 1 family. In terms of assembly, homodimer. FMN serves as cofactor.

The catalysed reaction is 2 a quinone + NADH + H(+) = 2 a 1,4-benzosemiquinone + NAD(+). It carries out the reaction N,N-dimethyl-1,4-phenylenediamine + anthranilate + 2 NAD(+) = 2-(4-dimethylaminophenyl)diazenylbenzoate + 2 NADH + 2 H(+). Quinone reductase that provides resistance to thiol-specific stress caused by electrophilic quinones. Its function is as follows. Also exhibits azoreductase activity. Catalyzes the reductive cleavage of the azo bond in aromatic azo compounds to the corresponding amines. This Rhizobium etli (strain ATCC 51251 / DSM 11541 / JCM 21823 / NBRC 15573 / CFN 42) protein is FMN-dependent NADH:quinone oxidoreductase 2.